The sequence spans 650 residues: MSRNLDSPVQTQMAVAVFKTPLTGASKMEGKQHHKHQHLQRQSSGRRVFVQTETGCVLGMELDRSDNVHTVKRRLQIALNFPTEESSLTYGDMVLTNDLSAVRNDSPLLLKRNFMHRSSSTPCLSPTGRDLQQKDRSGPIEILGHSDCFSIVKHMVKDIVKAMKMGVEPLPVHSGLGGAYYFRNKRGESVAIVKPTDEEPFAPNNPKGFVGKALGQPGLKSSVRVGETGFREVAAYLLDYGRFANVPPTALVKITHSVFNVNDGVKGNKPREKKLVSKIASFQKFVAHDFDASDHGTSSFPVTSVHRIGILDIRIFNTDRHGGNLLVKKLDGVGMFGQVELIPIDHGLCLPETLEDPYFEWIHWPQASLPFSDEEVDYIQSLDPVKDCDMLRRELPMIREACLRVLVLCTIFLKEASAYGLCLAEIGEMMTREFRPGEEEPSELEVVCIEAKRSVTERDVFSPRSDVVGEAEFQFDLDCDDLESVYSSKIQLTDDYFTKNPFSNGRSSLGKLEESIKEEEEDEEEEEDKTENTVPMIIMKDSFFSSAAFHDKAPSLSKLSTSMKNTHLSDTTRKNPKPLTRGKSENTSSGHKSANEQLPVSASFVKVADMKEDEWVLFLERFQELLGPAFAKRKTATLSKRQRLGTSCQF.

The Ubiquitin-like; degenerate domain occupies 46-103 (RRVFVQTETGCVLGMELDRSDNVHTVKRRLQIALNFPTEESSLTYGDMVLTNDLSAVR). The region spanning 166–463 (GVEPLPVHSG…SVTERDVFSP (298 aa)) is the PI3K/PI4K catalytic domain. The interval 172–178 (VHSGLGG) is G-loop. Residues 173 to 179 (HSGLGGA), Lys-194, and 283 to 286 (QKFV) each bind ATP. Residues 316–324 (FNTDRHGGN) form a catalytic loop region. The segment at 343-369 (PIDHGLCLPETLEDPYFEWIHWPQASL) is activation loop. Residue Asp-345 coordinates ATP. Disordered regions lie at residues 508-534 (SLGK…ENTV) and 560-595 (STSM…KSAN). The segment covering 516–529 (IKEEEEDEEEEEDK) has biased composition (acidic residues). 2 stretches are compositionally biased toward polar residues: residues 560 to 569 (STSMKNTHLS) and 585 to 595 (ENTSSGHKSAN). Ser-593 is subject to Phosphoserine.

The protein belongs to the PI3/PI4-kinase family. Type II PI4K subfamily.

It catalyses the reaction a 1,2-diacyl-sn-glycero-3-phospho-(1D-myo-inositol) + ATP = a 1,2-diacyl-sn-glycero-3-phospho-(1D-myo-inositol 4-phosphate) + ADP + H(+). The phosphorylation of phosphatidylinositol (PI) to PI4P is the first committed step in the generation of phosphatidylinositol 4,5-bisphosphate (PIP2), a precursor of the second messenger inositol 1,4,5-trisphosphate (InsP3). Undergoes autophosphorylation and phosphorylates serine/threonine residues of protein substrates. This Arabidopsis thaliana (Mouse-ear cress) protein is Phosphatidylinositol 4-kinase gamma 7.